The chain runs to 388 residues: MNLHEYQAKELLASYGLPVQGGILAHNGEEAAAAYDKLGGKFAVVKAQVHAGGRGKAGGVKVVKSREKAKEVAESLIGTNLVTYQTDANGQPVNSVLVCEDMYPVQTELYLGAVVDRSTRRVTFMASTEGGVEIEKVAAETPEKIFKVTVDPLVGLQPCQAREVAFQLGLKDKQINEFAKLMTGAYKAFVENDFALFEVNPLAVRENGALACVDGKIGIDSNALYRLPKIAELRDKSQENERELKASEFDLNYVALEGKIGCMVNGAGLAMATMDIIKLKGGQPANFLDVGGGATKDRVVEAFKLILEDKSVKGVLINIFGGIVRCDMIAEAIVAAVKEINVNVPVVVRLEGNNAELGAKILNESGLKLTSADGLNDAAEKIVAAVNA.

One can recognise an ATP-grasp domain in the interval 9-245 (KELLASYGLP…KSQENERELK (237 aa)). ATP-binding positions include Lys46, 53–55 (GRG), Glu100, Tyr103, and Glu108. Residues Asn200 and Asp214 each contribute to the Mg(2+) site. Substrate-binding positions include Asn265 and 322–324 (GIV).

It belongs to the succinate/malate CoA ligase beta subunit family. In terms of assembly, heterotetramer of two alpha and two beta subunits. Mg(2+) is required as a cofactor.

It carries out the reaction succinate + ATP + CoA = succinyl-CoA + ADP + phosphate. The catalysed reaction is GTP + succinate + CoA = succinyl-CoA + GDP + phosphate. It participates in carbohydrate metabolism; tricarboxylic acid cycle; succinate from succinyl-CoA (ligase route): step 1/1. Functionally, succinyl-CoA synthetase functions in the citric acid cycle (TCA), coupling the hydrolysis of succinyl-CoA to the synthesis of either ATP or GTP and thus represents the only step of substrate-level phosphorylation in the TCA. The beta subunit provides nucleotide specificity of the enzyme and binds the substrate succinate, while the binding sites for coenzyme A and phosphate are found in the alpha subunit. The protein is Succinate--CoA ligase [ADP-forming] subunit beta of Neisseria gonorrhoeae (strain ATCC 700825 / FA 1090).